Reading from the N-terminus, the 224-residue chain is Peroxiredoxin-6 (224 aa).

A Thioredoxin domain is found at Leu5 to Leu169. The tract at residues Asp31–Pro40 is required and sufficient for targeting to lysosomes and lamellar bodies. Residue Thr44 is modified to Phosphothreonine. Cys47 serves as the catalytic Cysteine sulfenic acid (-SOH) intermediate; for peroxidase activity. Lys63 carries the N6-acetyllysine modification. Tyr89 is subject to Phosphotyrosine. Asp140 (for phospholipase activity) is an active-site residue. Thr177 carries the phosphothreonine; by MAPK modification. Lys209 is modified (N6-acetyllysine; alternate). An N6-succinyllysine; alternate modification is found at Lys209.

Belongs to the peroxiredoxin family. Prx6 subfamily. Homodimer. Interacts with GSTP1; mediates PRDX6 glutathionylation and regeneration. Interacts with APEX1. Interacts with STH. May interact with FAM168B. May interact with HTR2A. In terms of processing, phosphorylation at Thr-177 by MAP kinases increases the phospholipase activity of the enzyme. Phosphorylated form exhibits a greater lysophosphatidylcholine acyltransferase activity compared to the non-phosphorylated form. Post-translationally, irreversibly inactivated by overoxidation of Cys-47 to sulfinic acid (Cys-SO(2)H) and sulfonic acid (Cys-SO(3)H) forms upon oxidative stress.

The protein resides in the cytoplasm. Its subcellular location is the lysosome. It catalyses the reaction a hydroperoxide + 2 glutathione = an alcohol + glutathione disulfide + H2O. The enzyme catalyses a 1,2-diacyl-sn-glycero-3-phosphocholine + H2O = a 1-acyl-sn-glycero-3-phosphocholine + a fatty acid + H(+). The catalysed reaction is a 1-acyl-sn-glycero-3-phosphocholine + an acyl-CoA = a 1,2-diacyl-sn-glycero-3-phosphocholine + CoA. It carries out the reaction 1-hexadecanoyl-sn-glycero-3-phosphocholine + hexadecanoyl-CoA = 1,2-dihexadecanoyl-sn-glycero-3-phosphocholine + CoA. It catalyses the reaction 1,2-dihexadecanoyl-sn-glycero-3-phosphocholine + H2O = 1-hexadecanoyl-sn-glycero-3-phosphocholine + hexadecanoate + H(+). Functionally, thiol-specific peroxidase that catalyzes the reduction of hydrogen peroxide and organic hydroperoxides to water and alcohols, respectively. Can reduce H(2)O(2) and short chain organic, fatty acid, and phospholipid hydroperoxides. Also has phospholipase activity, can therefore either reduce the oxidized sn-2 fatty acyl group of phospholipids (peroxidase activity) or hydrolyze the sn-2 ester bond of phospholipids (phospholipase activity). These activities are dependent on binding to phospholipids at acidic pH and to oxidized phospholipds at cytosolic pH. Plays a role in cell protection against oxidative stress by detoxifying peroxides and in phospholipid homeostasis. Exhibits acyl-CoA-dependent lysophospholipid acyltransferase which mediates the conversion of lysophosphatidylcholine (1-acyl-sn-glycero-3-phosphocholine or LPC) into phosphatidylcholine (1,2-diacyl-sn-glycero-3-phosphocholine or PC). Shows a clear preference for LPC as the lysophospholipid and for palmitoyl CoA as the fatty acyl substrate. In Rattus norvegicus (Rat), this protein is Peroxiredoxin-6 (Prdx6).